The chain runs to 435 residues: Evolutionarily conserved signaling intermediate in Toll pathway, mitochondrial (435 aa).

The N-terminal 48 residues, 1 to 48 (MSWVQVNLLVRSLSRGWGGLCRPALSGTPFAQVSLQALRGLHCSAATH), are a transit peptide targeting the mitochondrion. Residue K372 forms a Glycyl lysine isopeptide (Lys-Gly) (interchain with G-Cter in ubiquitin) linkage. The disordered stretch occupies residues 401 to 435 (LTTSRLEGQSPPHSPPKGPEEDDETIQAEQQQGQS).

It belongs to the ECSIT family. Interacts with MAP3K1, SMAD4 and TRAF6. Interacts with SMAD1 only after BMP4-treatment. Part of the mitochondrial complex I assembly/MCIA complex that comprises at least the core subunits TMEM126B, NDUFAF1, ECSIT and ACAD9 and complement subunits such as COA1 and TMEM186. Interacts with NDUFAF1. Interacts with ACAD9. Interacts with TRIM59. Interacts with TMEM70 and TMEM242. Interacts (when ubiquitinated) with NF-kappa-B subunits RELA and NFKB1. Interacts with RIGI, IFIT1 and MAVS; these interactions promote RLR-mediated type I IFN induction. Interacts with SQSTM1; this interaction inhibits TLR4 signaling via functional regulation of the TRAF6-ECSIT complex. Interacts with cereblon/CRBN; this interaction inhibits the ubiquitination of ECSIT. Post-translationally, ubiquitinated on Lys-372; leading to translocation in the nucleus together with RELA and NFKB1 and expression of NF-kappa-B-dependent genes. Detected in heart, brain, lung, liver, skeletal muscle, kidney and testis. Detected in embryonic mesoderm and epiblast, and in extraembryonic ectoderm.

The protein localises to the cytoplasm. It is found in the nucleus. Its subcellular location is the mitochondrion. Its function is as follows. Adapter protein that plays a role in different signaling pathways including TLRs and IL-1 pathways or innate antiviral induction signaling. Plays a role in the activation of NF-kappa-B by forming a signal complex with TRAF6 and TAK1/MAP3K7 to activate TAK1/MAP3K7 leading to activation of IKKs. Once ubiquitinated, interacts with the dissociated RELA and NFKB1 proteins and translocates to the nucleus where it induces NF-kappa-B-dependent gene expression. Plays a role in innate antiviral immune response by bridging the pattern recognition receptors RIGI and MDA5/IFIT1 to the MAVS complex at the mitochondrion. Promotes proteolytic activation of MAP3K1. Involved in the BMP signaling pathway. Required for normal embryonic development. As part of the MCIA complex, involved in the assembly of the mitochondrial complex I. The polypeptide is Evolutionarily conserved signaling intermediate in Toll pathway, mitochondrial (Mus musculus (Mouse)).